The primary structure comprises 345 residues: Probable glucan endo-1,3-beta-glucosidase BG4 (345 aa).

The first 22 residues, 1–22 (MLYSPKKLFLFFLSCIVLYVNS), serve as a signal peptide directing secretion. N23 and N119 each carry an N-linked (GlcNAc...) asparagine glycan. E128 (proton donor) is an active-site residue. The active-site Nucleophile is the E267. N277 and N306 each carry an N-linked (GlcNAc...) asparagine glycan.

This sequence belongs to the glycosyl hydrolase 17 family.

It is found in the secreted. The catalysed reaction is Hydrolysis of (1-&gt;3)-beta-D-glucosidic linkages in (1-&gt;3)-beta-D-glucans.. In terms of biological role, may play a role in plant defense against pathogens. In Arabidopsis thaliana (Mouse-ear cress), this protein is Probable glucan endo-1,3-beta-glucosidase BG4.